Reading from the N-terminus, the 108-residue chain is uncharacterized protein (108 aa).

This is an uncharacterized protein from Archaeoglobus fulgidus (strain ATCC 49558 / DSM 4304 / JCM 9628 / NBRC 100126 / VC-16).